Here is a 345-residue protein sequence, read N- to C-terminus: Calcium/calmodulin-dependent protein kinase type 1 (345 aa).

Residues 1–23 form a disordered region; it reads MPLFGSKKETAKKSSKKDKDEGK. One can recognise a Protein kinase domain in the interval 31 to 287; the sequence is YILKDLLGTG…CKQALGHPWI (257 aa). Residues 37-45 and lysine 61 each bind ATP; that span reads LGTGAFSQV. The Proton acceptor role is filled by aspartate 153. The segment at 287-327 is autoinhibitory domain; the sequence is ISGNAASTENIHSSVSEQLKKNFAKSRWRQAYHATAVIRQM. The interval 307 to 328 is calmodulin-binding; sequence KNFAKSRWRQAYHATAVIRQMR.

The protein belongs to the protein kinase superfamily. CAMK Ser/Thr protein kinase family. CaMK subfamily. In terms of tissue distribution, highly expressed in hepatopancreas and to a lesser extent in gills. Low expression in hemocytes, testis, ovary, heart, eyestalk, muscle and epidermis.

It carries out the reaction L-seryl-[protein] + ATP = O-phospho-L-seryl-[protein] + ADP + H(+). It catalyses the reaction L-threonyl-[protein] + ATP = O-phospho-L-threonyl-[protein] + ADP + H(+). Its activity is regulated as follows. Activated by Ca(2+)/calmodulin. Binding of calmodulin results in conformational change that relieves intrasteric autoinhibition. In terms of biological role, calcium/calmodulin-dependent protein kinase that operates in the calcium-triggered CaMKK-CaMK1 signaling cascade and, upon calcium influx, regulates transcription activators activity, cell cycle, hormone production, cell differentiation, actin filament organization and neurite outgrowth. Involved in molting. The sequence is that of Calcium/calmodulin-dependent protein kinase type 1 from Macrobrachium nipponense (Oriental river shrimp).